Here is a 141-residue protein sequence, read N- to C-terminus: Hemoglobin subunit alpha-1 (141 aa).

A Globin domain is found at 1–141 (VLTDEDKARV…LSKDLVSKYR (141 aa)). Histidine 58 contributes to the O2 binding site. Histidine 87 provides a ligand contact to heme b.

Belongs to the globin family. As to quaternary structure, heterotetramer of two alpha chains and two beta chains. As to expression, red blood cells.

Functionally, involved in oxygen transport from the lung to the various peripheral tissues. The chain is Hemoglobin subunit alpha-1 from Naja naja (Indian cobra).